Here is a 230-residue protein sequence, read N- to C-terminus: 6-carboxyhexanoate--CoA ligase (230 aa).

It belongs to the BioW family. Homodimer. The cofactor is Mg(2+).

The enzyme catalyses heptanedioate + ATP + CoA = 6-carboxyhexanoyl-CoA + AMP + diphosphate. It functions in the pathway metabolic intermediate metabolism; pimeloyl-CoA biosynthesis; pimeloyl-CoA from pimelate: step 1/1. In terms of biological role, catalyzes the transformation of pimelate into pimeloyl-CoA with concomitant hydrolysis of ATP to AMP. This is 6-carboxyhexanoate--CoA ligase from Staphylococcus aureus (strain MSSA476).